The chain runs to 624 residues: Iron transport multicopper oxidase FET3 (624 aa).

Residues methionine 1–alanine 20 form the signal peptide. Topologically, residues alanine 21–lysine 555 are extracellular. 2 Plastocyanin-like domains span residues isoleucine 46–glutamate 144 and asparagine 190–asparagine 292. 2 N-linked (GlcNAc...) asparagine glycosylation sites follow: asparagine 49 and asparagine 77. 2 residues coordinate Cu cation: histidine 81 and histidine 83. An N-linked (GlcNAc...) asparagine glycan is attached at asparagine 113. The Cu cation site is built by histidine 126 and histidine 128. Residues asparagine 194, asparagine 198, asparagine 244, asparagine 265, asparagine 292, asparagine 300, and asparagine 359 are each glycosylated (N-linked (GlcNAc...) asparagine). Positions asparagine 382–aspartate 499 constitute a Plastocyanin-like 3 domain. Cu cation contacts are provided by histidine 413, histidine 416, and histidine 418. The N-linked (GlcNAc...) asparagine glycan is linked to asparagine 441. Positions 481, 482, 483, and 487 each coordinate Cu cation. The chain crosses the membrane as a helical span at residues glycine 556 to phenylalanine 576. Over tyrosine 577 to histidine 624 the chain is Cytoplasmic. Residues aspartate 603–histidine 624 form a disordered region. The segment covering valine 608–histidine 624 has biased composition (low complexity).

This sequence belongs to the multicopper oxidase family. It depends on Cu cation as a cofactor.

Its subcellular location is the cell membrane. Functionally, iron transport multicopper ferroxidase required for Fe(2+) high affinity uptake. Required to oxidize Fe(2+) and release it from the transporter. Essential component of copper-dependent iron transport. This Candida albicans (Yeast) protein is Iron transport multicopper oxidase FET3 (FET3).